The primary structure comprises 668 residues: Potassium-transporting ATPase ATP-binding subunit (668 aa).

A run of 4 helical transmembrane segments spans residues 31 to 51 (MFLTEVSLFVSIFIYIFPSFF), 62 to 82 (FYVAVVVLLFLTVFFSSISTA), 213 to 233 (TVFLSGLTLIFLVITASIFAI), and 243 to 263 (IVMLIVLLIALIPTTIGALLP). Aspartate 298 functions as the 4-aspartylphosphate intermediate in the catalytic mechanism. ATP contacts are provided by residues aspartate 335, glutamate 339, 367 to 374 (FSSETKFS), and lysine 385. Mg(2+) is bound by residues aspartate 504 and aspartate 508. 3 consecutive transmembrane segments (helical) span residues 573–593 (YFVIIPAIFYMFPSLSLVNIL), 599–619 (IVAVTSALIFNTIIIVFLIPL), and 644–664 (IGGVITPFIAIKLIYMLLIAW).

This sequence belongs to the cation transport ATPase (P-type) (TC 3.A.3) family. Type IA subfamily. The system is composed of three essential subunits: KdpA, KdpB and KdpC.

It is found in the cell membrane. The catalysed reaction is K(+)(out) + ATP + H2O = K(+)(in) + ADP + phosphate + H(+). Part of the high-affinity ATP-driven potassium transport (or Kdp) system, which catalyzes the hydrolysis of ATP coupled with the electrogenic transport of potassium into the cytoplasm. This subunit is responsible for energy coupling to the transport system and for the release of the potassium ions to the cytoplasm. This is Potassium-transporting ATPase ATP-binding subunit from Thermoplasma volcanium (strain ATCC 51530 / DSM 4299 / JCM 9571 / NBRC 15438 / GSS1).